Reading from the N-terminus, the 217-residue chain is Trimethylamine corrinoid protein (217 aa).

The B12-binding N-terminal domain occupies 1 to 92 (MANKEEIIAK…EMEKRKSQTK (92 aa)). The B12-binding domain occupies 94 to 217 (LGTVAIGTIE…VAKVKAALNV (124 aa)). Position 107 (H107) interacts with methylcob(III)alamin.

This sequence belongs to the methylamine corrinoid protein family. In terms of assembly, can form a complex with MttB.

It participates in one-carbon metabolism; methanogenesis from trimethylamine. Acts probably as a methyl group carrier between MttB and either MtbA or MtaA. This Methanosarcina barkeri protein is Trimethylamine corrinoid protein.